The primary structure comprises 471 residues: Meiosis-specific with OB domain-containing protein (471 aa).

The segment at residues 167–272 is a DNA-binding region (OB); that stretch reads IINVLAAVKS…EANILLNFIR (106 aa).

This sequence belongs to the MEIOB family. Component of a multiprotein complex with RPA2 and SPATA22. Interacts with SPATA22. Interacts with the complex BRME1:HSF2BP:BRCA2.

Its subcellular location is the cytoplasm. It localises to the nucleus. The protein resides in the chromosome. Functionally, single-stranded DNA-binding protein required for homologous recombination in meiosis I. Required for double strand breaks (DSBs) repair and crossover formation and promotion of faithful and complete synapsis. Not required for the initial loading of recombinases but required to maintain a proper number of RAD51 and DMC1 foci after the zygotene stage. May act by ensuring the stabilization of recombinases, which is required for successful homology search and meiotic recombination. Displays Single-stranded DNA 3'-5' exonuclease activity in vitro. This is Meiosis-specific with OB domain-containing protein (MEIOB) from Macaca fascicularis (Crab-eating macaque).